A 614-amino-acid chain; its full sequence is Putative ABC transporter ATP-binding protein MA_1747 (614 aa).

ABC transporter domains lie at 11–251 (VRLE…KLGI) and 319–552 (VLIE…AGLL). Residues 45–52 (GPSGCGKS) and 352–359 (GHNGAGKT) each bind ATP.

It belongs to the ABC transporter superfamily.

The protein localises to the cell membrane. Probably part of an ABC transporter complex. Responsible for energy coupling to the transport system. The protein is Putative ABC transporter ATP-binding protein MA_1747 of Methanosarcina acetivorans (strain ATCC 35395 / DSM 2834 / JCM 12185 / C2A).